We begin with the raw amino-acid sequence, 1984 residues long: MAMLPPPGPQSFVHFTKQSLALIEQRISEEKAKGHKDEKKDDEEEGPKPSSDLEAGKQLPFIYGDIPPGMVSEPLEDLDPYYADKKTFIVLNKGKAIFRFNATPALYMLSPFSPLRRISIKILVHSLFSMLIMCTILTNCIFMTMSNPPDWTKNVEYTFTGIYTFESLIKILARGFCVGEFTFLRDPWNWLDFVVIVFAYLTEFVNLGNVSALRTFRVLRALKTISVIPGLKTIVGALIQSVKKLSDVMILTVFCLSVFALIGLQLFMGNLKHKCFRKDLEQNETLESIMSTAESEEELKRYFYYLEGSKDALLCGFSTDSGQCPEGYECVTAGRNPDYGYTSFDTFGWAFLALFRLMTQDYWENLYQQTLRAAGKTYMIFFVVVIFLGSFYLINLILAVVAMAYEEQNQANIEEAKQKELEFQQMLDRLKKEQEEAEAIAAAAAEYTSLGRSRIMGLSESSSETSRLSSKSAKERRNRRKKKKQKLSSGEEKGDDEKLSKSGSEESIRKKSFHLGVEGHHRAREKRLSTPNQSPLSIRGSLFSARRSSRTSLFSFKGRGRDLGSETEFADDEHSIFGDNESRRGSLFVPHRPRERRSSNISQASRSPPVLPVNGKMHSAVDCNGVVSLVDGPSALMLPNGQLLPEVIIDKATSDDSGTTNQMRKKRLSSSYFLSEDMLNDPHLRQRAMSRASILTNTVEELEESRQKCPPWWYRFAHTFLIWNCSPYWIKFKKFIYFIVMDPFVDLAITICIVLNTLFMAMEHHPMTDEFKNVLAVGNLVFTGIFAAEMVLKLIAMDPYEYFQVGWNIFDSLIVTLSLVELFLADVEGLSVLRSFRLLRVFKLAKSWPTLNMLIKIIGNSVGALGNLTLVLAIIVFIFAVVGMQLFGKSYKECVCKINENCKLPRWHMNDFFHSFLIVFRVLCGEWIETMWDCMEVAGQTMCLIVYMMVMVIGNLVVLNLFLALLLSSFSSDNLTAIEEDTDANNLQIAVARIKRGINYVKQTLREFILKSFSKKPKGSKDTKRTADPNNKRENYISNRTLAEISKDHNFLKEKDKISGFSSSLDKSFMDENDYQSFIHNPSLTVTVPIAPGESDLENMNTEELSSDSDSDYSKERRNRSSSSECSTVDNPLPGEEEAEAEPINADEPEACFTDGCVRRFPCCQVNIDSGKGKVWWTIRKTCYRIVEHSWFESFIVLMILLSSGALAFEDIYIEKKKTIKIILEYADKIFTYIFILEMLLKWVAYGYKTYFTNAWCWLDFLIVDVSLVTLVANTLGYSDLGPIKSLRTLRALRPLRALSRFEGMRVVVNALIGAIPSIMNVLLVCLIFWLIFSIMGVNLFAGKFYECVNTTDGSRFSVSQVANRSECFALMNVSGNVRWKNLKVNFDNVGLGYLSLLQVATFKGWMDIMYAAVDSVNVNAQPIYEYNLYMYIYFVIFIIFGSFFTLNLFIGVIIDNFNQQKKKLGGQDIFMTEEQKKYYNAMKKLGSKKPQKPIPRPGNKFQGCIFDLVTNQAFDITIMVLICLNMVTMMVEKEGQTDYMSFVLYWINVVFIILFTGECVLKLISLRHYYFTVGWNIFDFVVVILSIVGMFLAEMIEKYFVSPTLFRVIRLARIGRILRLIKGAKGIRTLLFALMMSLPALFNIGLLLFLVMFIYAIFGMSNFAYVKKEAGINDMFNFETFGNSMICLFQITTSAGWDGLLAPILNSAPPDCDPKKVHPGSSVEGDCGNPSVGIFYFVSYIIISFLVVVNMYIAVILENFSVATEESTEPLSEDDFEMFYEVWEKFDPDATQFIEFCKLSDFAAALDPPLLIAKPNKVQLIAMDLPMVSGDRIHCLDILFAFTKRVLGESGEMDSLRSQMEERFMSANPSKVSYEPITTTLKRKQEDVSATIIQRAYRRYRLRQNVKNISSIYIKDGDRDDDLPNKEDIVFDNVNENSSPEKTDATASTISPPSYDSVTKPDQEKYETDKTEKEDKEKDESRK.

The Cytoplasmic portion of the chain corresponds to 1-125 (MAMLPPPGPQ…RRISIKILVH (125 aa)). The span at 26–39 (RISEEKAKGHKDEK) shows a compositional bias: basic and acidic residues. Residues 26–55 (RISEEKAKGHKDEKKDDEEEGPKPSSDLEA) form a disordered region. An I repeat occupies 112–410 (FSPLRRISIK…VAMAYEEQNQ (299 aa)). The chain crosses the membrane as a helical span at residues 126–145 (SLFSMLIMCTILTNCIFMTM). The Extracellular segment spans residues 146-150 (SNPPD). Residues 151 to 172 (WTKNVEYTFTGIYTFESLIKIL) form a helical membrane-spanning segment. Residues 173-185 (ARGFCVGEFTFLR) lie on the Cytoplasmic side of the membrane. Residues 186–204 (DPWNWLDFVVIVFAYLTEF) traverse the membrane as a helical segment. Topologically, residues 205-210 (VNLGNV) are extracellular. The helical transmembrane segment at 211 to 227 (SALRTFRVLRALKTISV) threads the bilayer. Over 228 to 241 (IPGLKTIVGALIQS) the chain is Cytoplasmic. The chain crosses the membrane as a helical span at residues 242 to 267 (VKKLSDVMILTVFCLSVFALIGLQLF). Topologically, residues 268–346 (MGNLKHKCFR…PDYGYTSFDT (79 aa)) are extracellular. A disulfide bridge connects residues cysteine 275 and cysteine 324. The segment at residues 347-363 (FGWAFLALFRLMTQDYW) is an intramembrane region (pore-forming). Residues 364–376 (ENLYQQTLRAAGK) are Extracellular-facing. Residues 377 to 402 (TYMIFFVVVIFLGSFYLINLILAVVA) form a helical membrane-spanning segment. Residues 402-449 (AMAYEEQNQANIEEAKQKELEFQQMLDRLKKEQEEAEAIAAAAAEYTS) are a coiled coil. At 403–744 (MAYEEQNQAN…FIYFIVMDPF (342 aa)) the chain is on the cytoplasmic side. The segment covering 458–471 (LSESSSETSRLSSK) has biased composition (low complexity). Disordered regions lie at residues 458 to 540 (LSES…SIRG) and 574 to 609 (HSIFGDNESRRGSLFVPHRPRERRSSNISQASRSPP). Residues 474–486 (KERRNRRKKKKQK) show a composition bias toward basic residues. 2 stretches are compositionally biased toward basic and acidic residues: residues 489–509 (SGEEKGDDEKLSKSGSEESIR) and 574–584 (HSIFGDNESRR). Residues 684–708 (LRQRAMSRASILTNTVEELEESRQK) adopt a coiled-coil conformation. The stretch at 725–988 (CSPYWIKFKK…EEDTDANNLQ (264 aa)) is one II repeat. A helical membrane pass occupies residues 745-761 (VDLAITICIVLNTLFMA). At 762–770 (MEHHPMTDE) the chain is on the extracellular side. Residues 771 to 795 (FKNVLAVGNLVFTGIFAAEMVLKLI) traverse the membrane as a helical segment. Over 796–804 (AMDPYEYFQ) the chain is Cytoplasmic. The helical transmembrane segment at 805 to 821 (VGWNIFDSLIVTLSLVE) threads the bilayer. At 822-830 (LFLADVEGL) the chain is on the extracellular side. The chain crosses the membrane as a helical span at residues 831–847 (SVLRSFRLLRVFKLAKS). At 848-864 (WPTLNMLIKIIGNSVGA) the chain is on the cytoplasmic side. Residues 865–887 (LGNLTLVLAIIVFIFAVVGMQLF) form a helical membrane-spanning segment. The Extracellular portion of the chain corresponds to 888–914 (GKSYKECVCKINENCKLPRWHMNDFFH). A disulfide bridge connects residues cysteine 896 and cysteine 902. Residues 915–927 (SFLIVFRVLCGEW) constitute an intramembrane region (pore-forming). At 928-939 (IETMWDCMEVAG) the chain is on the extracellular side. Cysteine 934 and cysteine 943 form a disulfide bridge. Residues 940 to 966 (QTMCLIVYMMVMVIGNLVVLNLFLALL) traverse the membrane as a helical segment. The Cytoplasmic portion of the chain corresponds to 967–1185 (LSSFSSDNLT…WWTIRKTCYR (219 aa)). 2 disordered regions span residues 1015–1039 (KKPKGSKDTKRTADPNNKRENYISN) and 1089–1145 (PIAP…EPIN). A compositionally biased stretch (basic and acidic residues) spans 1019–1035 (GSKDTKRTADPNNKREN). The segment covering 1135–1145 (GEEEAEAEPIN) has biased composition (acidic residues). An III repeat occupies 1178–1486 (TIRKTCYRIV…KKYYNAMKKL (309 aa)). The chain crosses the membrane as a helical span at residues 1186-1210 (IVEHSWFESFIVLMILLSSGALAFE). Over 1211–1222 (DIYIEKKKTIKI) the chain is Extracellular. A helical transmembrane segment spans residues 1223–1248 (ILEYADKIFTYIFILEMLLKWVAYGY). The Cytoplasmic portion of the chain corresponds to 1249–1250 (KT). A helical membrane pass occupies residues 1251 to 1276 (YFTNAWCWLDFLIVDVSLVTLVANTL). Topologically, residues 1277 to 1285 (GYSDLGPIK) are extracellular. The helical transmembrane segment at 1286–1302 (SLRTLRALRPLRALSRF) threads the bilayer. At 1303–1315 (EGMRVVVNALIGA) the chain is on the cytoplasmic side. The helical transmembrane segment at 1316–1340 (IPSIMNVLLVCLIFWLIFSIMGVNL) threads the bilayer. The Extracellular segment spans residues 1341–1392 (FAGKFYECVNTTDGSRFSVSQVANRSECFALMNVSGNVRWKNLKVNFDNVGL). Cysteine 1348 and cysteine 1368 are disulfide-bonded. The pore-forming intramembrane region spans 1393–1403 (GYLSLLQVATF). Topologically, residues 1404-1429 (KGWMDIMYAAVDSVNVNAQPIYEYNL) are extracellular. A helical membrane pass occupies residues 1430–1455 (YMYIYFVIFIIFGSFFTLNLFIGVII). The Cytoplasmic portion of the chain corresponds to 1456–1512 (DNFNQQKKKLGGQDIFMTEEQKKYYNAMKKLGSKKPQKPIPRPGNKFQGCIFDLVTN). The residue at position 1488 (serine 1488) is a Phosphoserine; by PKC. The stretch at 1495–1793 (IPRPGNKFQG…WEKFDPDATQ (299 aa)) is one IV repeat. Residues 1513 to 1532 (QAFDITIMVLICLNMVTMMV) form a helical membrane-spanning segment. The Extracellular portion of the chain corresponds to 1533 to 1543 (EKEGQTDYMSF). A helical transmembrane segment spans residues 1544-1565 (VLYWINVVFIILFTGECVLKLI). Residues 1566-1574 (SLRHYYFTV) lie on the Cytoplasmic side of the membrane. Residues 1575-1596 (GWNIFDFVVVILSIVGMFLAEM) form a helical membrane-spanning segment. At 1597-1605 (IEKYFVSPT) the chain is on the extracellular side. Residues 1606 to 1625 (LFRVIRLARIGRILRLIKGA) form a helical membrane-spanning segment. The Cytoplasmic segment spans residues 1626–1638 (KGIRTLLFALMMS). The chain crosses the membrane as a helical span at residues 1639-1661 (LPALFNIGLLLFLVMFIYAIFGM). Over 1662-1684 (SNFAYVKKEAGINDMFNFETFGN) the chain is Extracellular. The pore-forming intramembrane region spans 1685 to 1697 (SMICLFQITTSAG). Over 1698–1731 (WDGLLAPILNSAPPDCDPKKVHPGSSVEGDCGNP) the chain is Extracellular. Cysteines 1713 and 1728 form a disulfide. The helical transmembrane segment at 1732-1757 (SVGIFYFVSYIIISFLVVVNMYIAVI) threads the bilayer. Topologically, residues 1758–1984 (LENFSVATEE…EDKEKDESRK (227 aa)) are cytoplasmic. The IQ domain maps to 1887-1916 (EDVSATIIQRAYRRYRLRQNVKNISSIYIK). Residues 1933–1984 (DNVNENSSPEKTDATASTISPPSYDSVTKPDQEKYETDKTEKEDKEKDESRK) are disordered. A compositionally biased stretch (polar residues) spans 1946–1958 (ATASTISPPSYDS). Residues 1960–1984 (TKPDQEKYETDKTEKEDKEKDESRK) are compositionally biased toward basic and acidic residues.

The protein belongs to the sodium channel (TC 1.A.1.10) family. Nav1.7/SCN9A subfamily. In terms of assembly, the Nav1.7 voltage-gated sodium channel consists of an ion-conducting alpha subunit SCN9A which is functional on its own regulated by one or more beta-1 (SCN1B), beta-2 (SCN2B), beta-3 (SCN3B) and beta-4 (SCN4B) subunits. SCN1B and SCN3B are non-covalently associated with SCN9A. SCN2B and SCN4B are disulfide-linked to SCN9A. SCN1B regulates channel inactivation. Interacts with NEDD4 and NEDD4L; regulates Nav1.7 activity most probably through ubiquitination and subsequent endocytosis. Interacts with TMEM233; modulates the gating properties of NaV1.7. In terms of processing, ubiquitinated by NEDD4L; which may promote its endocytosis. Post-translationally, phosphorylation at Ser-1488 by PKC in a highly conserved cytoplasmic loop increases peak sodium currents. As to expression, expressed strongly in sciatic nerves, with moderate levels in kidney. Not detected in liver, brain and muscle.

Its subcellular location is the cell membrane. The protein resides in the cell projection. It is found in the neuron projection. The protein localises to the axon. The enzyme catalyses Na(+)(in) = Na(+)(out). Functionally, pore-forming subunit of Nav1.7, a voltage-gated sodium (Nav) channel that directly mediates the depolarizing phase of action potentials in excitable membranes. Navs, also called VGSCs (voltage-gated sodium channels) or VDSCs (voltage-dependent sodium channels), operate by switching between closed and open conformations depending on the voltage difference across the membrane. In the open conformation they allow Na(+) ions to selectively pass through the pore, along their electrochemical gradient. The influx of Na(+) ions provokes membrane depolarization, initiating the propagation of electrical signals throughout cells and tissues. Nav1.7 plays a crucial role in controlling the excitability and action potential propagation from nociceptor neurons, thereby contributing to the sensory perception of pain. This Mus musculus (Mouse) protein is Sodium channel protein type 9 subunit alpha.